A 477-amino-acid chain; its full sequence is Bifunctional protein HldE (477 aa).

The segment at 1–318 (MKVNLPAFER…ENAVRGRADT (318 aa)) is ribokinase. Residue 195–198 (NLSE) participates in ATP binding. Asp-264 is a catalytic residue. Residues 344 to 477 (MTNGVFDILH…IKKIQTESEK (134 aa)) are cytidylyltransferase.

The protein in the N-terminal section; belongs to the carbohydrate kinase PfkB family. This sequence in the C-terminal section; belongs to the cytidylyltransferase family. In terms of assembly, homodimer.

The enzyme catalyses D-glycero-beta-D-manno-heptose 7-phosphate + ATP = D-glycero-beta-D-manno-heptose 1,7-bisphosphate + ADP + H(+). The catalysed reaction is D-glycero-beta-D-manno-heptose 1-phosphate + ATP + H(+) = ADP-D-glycero-beta-D-manno-heptose + diphosphate. It participates in nucleotide-sugar biosynthesis; ADP-L-glycero-beta-D-manno-heptose biosynthesis; ADP-L-glycero-beta-D-manno-heptose from D-glycero-beta-D-manno-heptose 7-phosphate: step 1/4. Its pathway is nucleotide-sugar biosynthesis; ADP-L-glycero-beta-D-manno-heptose biosynthesis; ADP-L-glycero-beta-D-manno-heptose from D-glycero-beta-D-manno-heptose 7-phosphate: step 3/4. Functionally, catalyzes the phosphorylation of D-glycero-D-manno-heptose 7-phosphate at the C-1 position to selectively form D-glycero-beta-D-manno-heptose-1,7-bisphosphate. In terms of biological role, catalyzes the ADP transfer from ATP to D-glycero-beta-D-manno-heptose 1-phosphate, yielding ADP-D-glycero-beta-D-manno-heptose. The chain is Bifunctional protein HldE from Salmonella enteritidis PT4 (strain P125109).